An 899-amino-acid chain; its full sequence is Toll-like receptor 4 (899 aa).

An N-terminal signal peptide occupies residues 1 to 46 (MCPLQIHVLHLIQGNQKNRKGKYVNMTRQLWYILPLLFLLCHCVTS). N-linked (GlcNAc...) asparagine glycosylation is found at Asn25, Asn75, Asn83, and Asn93. The Extracellular segment spans residues 47–702 (ERRCYFSKIS…LERNCRSYTA (656 aa)). LRR repeat units follow at residues 83–103 (NESVVQIDLSNNSINVFPDLP), 104–126 (RSLLVLDISRNPLKQFQKNAFAR), 128–150 (QNLTTLSIVNNTYGLQPSNLTAG), 155–179 (LTRLTYLDLRGSWNGTAYPEEVLSD), 181–202 (VSLNALRINGKQKGFGVLMRKI), 203–229 (HALKRLDISGSEGDCKIDCLHAGYFQN), and 230–253 (VHGIQELNVSNCHLTNILEGTFSY). Asn129, Asn137, Asn146, and Asn168 each carry an N-linked (GlcNAc...) asparagine glycan. 4 N-linked (GlcNAc...) asparagine glycosylation sites follow: Asn237, Asn256, Asn275, and Asn313. LRR repeat units lie at residues 257–282 (LTHLDISYNEELSFNILRNISKDLKN), 313–336 (NTSLRELHANSNRLETIQSGVLMY), 338–360 (PKTLQHASVSDNKLTMGMYALET), and 363–386 (LVNLKTYDMSLQFKSHDPRDIFSN). N-linked (GlcNAc...) asparagine glycans are attached at residues Asn388, Asn432, and Asn463. LRR repeat units follow at residues 468-493 (HYPLLKYRIGNNKIKEIYAQDNVFYD), 501-524 (LEGLEILDLSNNFCTNLSTFFFDY), 526-549 (TGLKSVKLNHNILGFSLAKDEKGE), 554-577 (LLKLKHLEIKYNRIQVLPKKILRN), 579-601 (ISLETLDLADNWLRKFKVDLKHI), 602-624 (KGLRHIDLSNNQISELPPGVMRE), and 631-654 (SSNLTVNLTGNSLLCNCENEHFLR). N-linked (GlcNAc...) asparagine glycosylation occurs at Asn516. 3 N-linked (GlcNAc...) asparagine glycosylation sites follow: Asn633, Asn637, and Asn668. Residues 703–723 (VIVLFSCVFVILLTVIVCGVV) form a helical membrane-spanning segment. Residues 724 to 899 (YRYRWKLRYL…WRKLRDPISM (176 aa)) are Cytoplasmic-facing. The region spanning 756 to 897 (YEFDAFISYA…IFWRKLRDPI (142 aa)) is the TIR domain.

This sequence belongs to the Toll-like receptor family. In terms of tissue distribution, expressed in all tissues tested. The highest expression is in the hepatopancreas, with moderate expression in the gills, and low expression in the gonads, adductor muscle, hemocytes, and mantle.

The protein localises to the cell membrane. May be involved in the innate immune response. The polypeptide is Toll-like receptor 4 (Pinctada imbricata (Atlantic pearl-oyster)).